Reading from the N-terminus, the 450-residue chain is Salicylate synthase (450 aa).

The active-site Proton donor is Glu-252. 270-271 (GT) provides a ligand contact to substrate. A Mg(2+)-binding site is contributed by Glu-297. Residues Tyr-385, Arg-405, and 419–421 (GAG) each bind substrate. Residues Glu-431 and Glu-434 each coordinate Mg(2+). Lys-438 serves as a coordination point for substrate.

This sequence belongs to the anthranilate synthase component I family. Salicylate synthase subfamily. In terms of assembly, monomer. Mg(2+) serves as cofactor.

The enzyme catalyses chorismate = isochorismate. It carries out the reaction isochorismate = salicylate + pyruvate. It catalyses the reaction chorismate = prephenate. It participates in siderophore biosynthesis; mycobactin biosynthesis. In terms of biological role, involved in the incorporation of salicylate into the virulence-conferring salicylate-based siderophore mycobactin. Catalyzes the initial conversion of chorismate to yield the intermediate isochorismate (isochorismate synthase activity), and the subsequent elimination of the enolpyruvyl side chain in a lyase reaction to give salicylate (isochorismate pyruvate-lyase activity). In the absence of magnesium, MbtI displays a chorismate mutase activity and converts chorismate to prephenate. This chain is Salicylate synthase (mbtI), found in Mycolicibacterium paratuberculosis (strain ATCC BAA-968 / K-10) (Mycobacterium paratuberculosis).